A 149-amino-acid chain; its full sequence is D-aminoacyl-tRNA deacylase (149 aa).

The Gly-cisPro motif, important for rejection of L-amino acids motif lies at 137-138 (GP).

It belongs to the DTD family. Homodimer.

The protein resides in the cytoplasm. It catalyses the reaction glycyl-tRNA(Ala) + H2O = tRNA(Ala) + glycine + H(+). The catalysed reaction is a D-aminoacyl-tRNA + H2O = a tRNA + a D-alpha-amino acid + H(+). In terms of biological role, an aminoacyl-tRNA editing enzyme that deacylates mischarged D-aminoacyl-tRNAs. Also deacylates mischarged glycyl-tRNA(Ala), protecting cells against glycine mischarging by AlaRS. Acts via tRNA-based rather than protein-based catalysis; rejects L-amino acids rather than detecting D-amino acids in the active site. By recycling D-aminoacyl-tRNA to D-amino acids and free tRNA molecules, this enzyme counteracts the toxicity associated with the formation of D-aminoacyl-tRNA entities in vivo and helps enforce protein L-homochirality. This is D-aminoacyl-tRNA deacylase from Thioalkalivibrio sulfidiphilus (strain HL-EbGR7).